Consider the following 250-residue polypeptide: Superoxide dismutase 1 copper chaperone (250 aa).

The HMA domain occupies 4–67; the sequence is SFEIVFAVPM…AIQSTGKDAI (64 aa). The Cu cation site is built by Cys-15, Cys-18, Cys-229, and Cys-231.

It belongs to the CCS1 family. The cofactor is Cu(2+).

The protein localises to the cytoplasm. Its function is as follows. Copper chaperone for superoxide dismutase 1 (SOD1). Binds copper ions and delivers them specifically to SOD1. The polypeptide is Superoxide dismutase 1 copper chaperone (CCS1) (Debaryomyces hansenii (strain ATCC 36239 / CBS 767 / BCRC 21394 / JCM 1990 / NBRC 0083 / IGC 2968) (Yeast)).